The primary structure comprises 144 residues: Large ribosomal subunit protein uL15 (144 aa).

A disordered region spans residues 20–49 (GRGIGSGLGKTGGRGHKGQKSRSGGFHKVG). A compositionally biased stretch (gly residues) spans 21–31 (RGIGSGLGKTG).

This sequence belongs to the universal ribosomal protein uL15 family. As to quaternary structure, part of the 50S ribosomal subunit.

In terms of biological role, binds to the 23S rRNA. The sequence is that of Large ribosomal subunit protein uL15 from Neisseria meningitidis serogroup C (strain 053442).